The chain runs to 258 residues: Phosphate import ATP-binding protein PstB (258 aa).

The ABC transporter domain maps to 5 to 253 (LDLNDVNIYY…PTKKETEDYI (249 aa)). Residue 37-44 (GPSGCGKS) participates in ATP binding.

Belongs to the ABC transporter superfamily. Phosphate importer (TC 3.A.1.7) family. In terms of assembly, the complex is composed of two ATP-binding proteins (PstB), two transmembrane proteins (PstC and PstA) and a solute-binding protein (PstS).

The protein resides in the cell membrane. The catalysed reaction is phosphate(out) + ATP + H2O = ADP + 2 phosphate(in) + H(+). Part of the ABC transporter complex PstSACB involved in phosphate import. Responsible for energy coupling to the transport system. This Corynebacterium jeikeium (strain K411) protein is Phosphate import ATP-binding protein PstB.